Consider the following 472-residue polypeptide: Transmembrane protein 8B (472 aa).

The disordered stretch occupies residues 1 to 36 (MNMPQSLGNQPLPPEPPSLGTPAEGPGTTSPPEHCW). Residues 1–233 (MNMPQSLGNQ…ADALTYGFQL (233 aa)) lie on the Extracellular side of the membrane. N92 and N100 each carry an N-linked (GlcNAc...) asparagine glycan. Positions 182-221 (FLSPCVDDCGPYGQCKLLRTHNYLYAACECKAGWRGWGCT) constitute an EGF-like domain. 3 disulfides stabilise this stretch: C186–C196, C190–C209, and C211–C220. A helical transmembrane segment spans residues 234-254 (LSTLLLCLSNLMFLPPVVLAI). The Cytoplasmic portion of the chain corresponds to 255–257 (RSR). Residues 258 to 277 (YVLEAAVYTFTMFFSTFYHA) form a helical membrane-spanning segment. Over 278–292 (CDQPGIVVFCIMDYD) the chain is Extracellular. Residues 293–313 (VLQFCDFLGSLMSVWVTVIAM) traverse the membrane as a helical segment. Residues 314 to 315 (AR) are Cytoplasmic-facing. Residues 316–336 (LQPVVKQVLYLLGAMLLSMAL) traverse the membrane as a helical segment. The Extracellular portion of the chain corresponds to 337–342 (QLDRHG). A helical transmembrane segment spans residues 343–363 (LWNLLGPSLFALGILATAWTV). Over 364–379 (RSVRRRHCYPPTWRRW) the chain is Cytoplasmic. Residues 380–400 (LFYLCPGSLIAGSAVLLYAFV) form a helical membrane-spanning segment. At 401–405 (ETRDN) the chain is on the extracellular side. Residues 406-426 (YFYIHSIWHMLIAGSVGFLLP) traverse the membrane as a helical segment. The Cytoplasmic portion of the chain corresponds to 427 to 472 (PRAKTDHGVPSGARARGCGYQLCINEQEELGLVGPGGATVSSICAS).

The protein belongs to the TMEM8 family. In terms of assembly, isoform 2 (via its cytoplasmic part) interacts with EZR. Post-translationally, isoform 2 is N-glycosylated.

Its subcellular location is the cell membrane. The protein resides in the cytoplasm. The protein localises to the nucleus. It is found in the mitochondrion. It localises to the endoplasmic reticulum. May function as a regulator of the EGFR pathway. Probable tumor suppressor which may function in cell growth, proliferation and adhesion. The sequence is that of Transmembrane protein 8B (TMEM8B) from Homo sapiens (Human).